We begin with the raw amino-acid sequence, 176 residues long: ATP synthase subunit d, mitochondrial (176 aa).

As to quaternary structure, F-type ATP synthases have 2 components, the catalytic core F(1) and the membrane-embedded component F(0), linked together by a central stalk and a peripheral stalk. The central stalk, also called rotor shaft, is often seen as part of F(1). The peripheral stalk is seen as part of F(0). F(0) contains the membrane channel next to the rotor. F-type ATP synthases form dimers but each monomer functions independently in ATP generation. The dimer consists of 17 different polypeptides: ATP1 (subunit alpha, 3 molecules per monomer, part of F(1)), ATP2 (subunit beta, 3 copies per monomer, part of F(1)), ATP3 (subunit gamma, part of the central stalk), ATP4 (subunit b, part of the peripheral stalk), ATP5/OSCP (subunit 5/OSCP, part of the peripheral stalk), ATP6 (subunit a, part of the peripheral stalk), ATP7 (subunit d, part of the peripheral stalk), ATP8 (subunit 8, part of the peripheral stalk), OLI1 (subunit c, part of the rotor, 10 molecules per monomer), ATP14 (subunit h, part of the peripheral stalk), ATP15 (subunit epsilon, part of the central stalk), ATP16 (subunit delta, part of the central stalk), ATP17 (subunit f, part of the peripheral stalk), ATP18 (subunit i/j, part of the peripheral stalk), ATP19 (subunit k, dimer-specific, at interface between monomers), ATP20 (subunit g, at interface between monomers), TIM11 (subunit e, at interface between monomers).

It localises to the mitochondrion inner membrane. Functionally, mitochondrial membrane ATP synthase (F(1)F(0) ATP synthase or Complex V) produces ATP from ADP in the presence of a proton gradient across the membrane which is generated by electron transport complexes of the respiratory chain. F-type ATP synthases consist of two structural domains, F(1) - containing the extramembraneous catalytic core, and F(0) - containing the membrane proton channel, linked together by a central stalk and a peripheral stalk. During catalysis, ATP synthesis in the catalytic domain of F(1) is coupled via a rotary mechanism of the central stalk subunits to proton translocation. Part of the complex F(0) domain and the peripheral stalk, which acts as a stator to hold the catalytic alpha/ATP1(3)beta/ATP2(3) subcomplex and subunit a/ATP6 static relative to the rotary elements. The protein is ATP synthase subunit d, mitochondrial of Yarrowia lipolytica (strain CLIB 122 / E 150) (Yeast).